The following is a 402-amino-acid chain: Argininosuccinate synthase (402 aa).

Residues A10–S18 and A38 each bind ATP. Residue Y89 coordinates L-citrulline. An ATP-binding site is contributed by G119. T121, N125, and D126 together coordinate L-aspartate. Residue N125 participates in L-citrulline binding. Positions 129, 177, 186, 262, and 274 each coordinate L-citrulline.

The protein belongs to the argininosuccinate synthase family. Type 1 subfamily. Homotetramer.

It localises to the cytoplasm. The enzyme catalyses L-citrulline + L-aspartate + ATP = 2-(N(omega)-L-arginino)succinate + AMP + diphosphate + H(+). Its pathway is amino-acid biosynthesis; L-arginine biosynthesis; L-arginine from L-ornithine and carbamoyl phosphate: step 2/3. The sequence is that of Argininosuccinate synthase from Prochlorococcus marinus (strain SARG / CCMP1375 / SS120).